We begin with the raw amino-acid sequence, 2339 residues long: Inverse autotransporter adhesin YeeJ (2339 aa).

The first 26 residues, 1–26, serve as a signal peptide directing secretion; the sequence is MGIKLRRLTAGICLITQLAFPMAAAA. One can recognise a LysM domain in the interval 50–98; it reads VPYTLGALESAQSVAERFGISVAELRKLNQFRTFARGFDNVRQGDELDV. Residues 125–400 are inverse autotransporter; sequence TSQQIGSLLA…SRYDLVDRNN (276 aa). The tract at residues 513-605 is invasin 3 domain; that stretch reads QKDSSVSLST…GVDAAKAPAV (93 aa). 13 consecutive Big-1 domains span residues 721–815, 822–913, 920–1017, 1024–1121, 1128–1221, 1229–1331, 1339–1432, 1439–1535, 1542–1639, 1646–1730, 1746–1837, 1840–1934, and 1942–2034; these read IATL…VSFV, QVDL…VNFI, ALTL…MTFV, VVVL…VTFV, QVVL…VHFI, IIEL…SINV, HLTL…VTYV, EITL…VNFI, QVNL…VTLI, KLAS…PTEV, ITSL…LEAI, KLTL…VKVT, and VASF…ITLV. The interval 2236–2339 is C-type lectin domain; sequence KSWWVNAGEA…FAYATCYKNL (104 aa).

The protein belongs to the intimin/invasin family.

It is found in the cell outer membrane. A cryptic inverse autotransporter, it is not expressed in wild-type strain MG1655. Upon overexpression shows increased adherence to polyvinyl chloride (PVC) plates and increased mature biofilm formation. Probably binds peptidoglycan. This is Inverse autotransporter adhesin YeeJ (yeeJ) from Escherichia coli (strain K12).